We begin with the raw amino-acid sequence, 265 residues long: Nitrogenase iron protein 2 (265 aa).

ATP is bound at residue 8 to 15 (GKGGIGKS). Cysteine 91 is a binding site for [4Fe-4S] cluster. At arginine 94 the chain carries ADP-ribosylarginine; by dinitrogenase reductase ADP-ribosyltransferase. [4Fe-4S] cluster is bound at residue cysteine 126.

This sequence belongs to the NifH/BchL/ChlL family. In terms of assembly, homodimer. Requires [4Fe-4S] cluster as cofactor. In terms of processing, the reversible ADP-ribosylation of Arg-94 inactivates the nitrogenase reductase and regulates nitrogenase activity.

The enzyme catalyses N2 + 8 reduced [2Fe-2S]-[ferredoxin] + 16 ATP + 16 H2O = H2 + 8 oxidized [2Fe-2S]-[ferredoxin] + 2 NH4(+) + 16 ADP + 16 phosphate + 6 H(+). Functionally, the key enzymatic reactions in nitrogen fixation are catalyzed by the nitrogenase complex, which has 2 components: the iron protein and the molybdenum-iron protein. The sequence is that of Nitrogenase iron protein 2 (nifH2) from Methanothermobacter thermautotrophicus (strain ATCC 29096 / DSM 1053 / JCM 10044 / NBRC 100330 / Delta H) (Methanobacterium thermoautotrophicum).